Here is a 303-residue protein sequence, read N- to C-terminus: Probable 5-dehydro-4-deoxyglucarate dehydratase (303 aa).

Belongs to the DapA family.

The enzyme catalyses 5-dehydro-4-deoxy-D-glucarate + H(+) = 2,5-dioxopentanoate + CO2 + H2O. Its pathway is carbohydrate acid metabolism; D-glucarate degradation; 2,5-dioxopentanoate from D-glucarate: step 2/2. The sequence is that of Probable 5-dehydro-4-deoxyglucarate dehydratase from Polaromonas naphthalenivorans (strain CJ2).